A 700-amino-acid chain; its full sequence is UvrABC system protein B (700 aa).

The region spanning 26 to 183 (SGLHRGDRIQ…RALVGIQYLR (158 aa)) is the Helicase ATP-binding domain. 39 to 46 (GVTGSGKT) provides a ligand contact to ATP. The short motif at 92–115 (YYDYYQPEAYVPSSDTYIEKDASI) is the Beta-hairpin element. Residues 430 to 596 (QVDDLLHEIR…GVTKSVDEVR (167 aa)) enclose the Helicase C-terminal domain. A disordered region spans residues 608–627 (REGEAPAPRRLASESAPRSR). The UVR domain occupies 631 to 666 (ETLVGELEIAMREAAVALDFEAAARLRDQLFEVRTA). A disordered region spans residues 667 to 700 (LGQAPSEARGNAQAPKRPPGSAPQRRAGGGRRGR).

The protein belongs to the UvrB family. As to quaternary structure, forms a heterotetramer with UvrA during the search for lesions. Interacts with UvrC in an incision complex.

The protein resides in the cytoplasm. Its function is as follows. The UvrABC repair system catalyzes the recognition and processing of DNA lesions. A damage recognition complex composed of 2 UvrA and 2 UvrB subunits scans DNA for abnormalities. Upon binding of the UvrA(2)B(2) complex to a putative damaged site, the DNA wraps around one UvrB monomer. DNA wrap is dependent on ATP binding by UvrB and probably causes local melting of the DNA helix, facilitating insertion of UvrB beta-hairpin between the DNA strands. Then UvrB probes one DNA strand for the presence of a lesion. If a lesion is found the UvrA subunits dissociate and the UvrB-DNA preincision complex is formed. This complex is subsequently bound by UvrC and the second UvrB is released. If no lesion is found, the DNA wraps around the other UvrB subunit that will check the other stand for damage. The sequence is that of UvrABC system protein B from Gemmatimonas aurantiaca (strain DSM 14586 / JCM 11422 / NBRC 100505 / T-27).